The sequence spans 415 residues: von Willebrand factor A domain-containing protein 1 (415 aa).

The first 18 residues, 1–18, serve as a signal peptide directing secretion; that stretch reads MLFWTAFSMALSLRLALA. The VWFA domain maps to 34-209; it reads DLLFLLDSSA…IIARELRGSI (176 aa). Ser74, Ser80, and Ser93 each carry phosphoserine. Fibronectin type-III domains follow at residues 214–305 and 307–403; these read QPQQ…LQEE and GPER…TRAP. A glycan (N-linked (GlcNAc...) asparagine) is linked at Asn264. Cys369 and Cys393 are oxidised to a cystine. The disordered stretch occupies residues 391–415; the sequence is KACTASGARTRAPQSMRPEAGPREP.

As to quaternary structure, homodimer or homomultimer; disulfide-linked. Interacts with HSPG2. In terms of processing, N-glycosylated. In terms of tissue distribution, expressed at high levels in the chondrocytes. Detected in the vasculature of neural tissues, in basement membrane structures of the peripheral nervous system, in the apical ectodermal ridge of developing limb buds, and in skeletal and cardiac muscle (at protein level).

The protein localises to the secreted. It localises to the extracellular space. The protein resides in the extracellular matrix. Its subcellular location is the basement membrane. Functionally, promotes matrix assembly. Involved in the organization of skeletal muscles and in the formation of neuromuscular junctions. The chain is von Willebrand factor A domain-containing protein 1 (Vwa1) from Mus musculus (Mouse).